A 260-amino-acid chain; its full sequence is Indole-3-glycerol phosphate synthase (260 aa).

Belongs to the TrpC family.

It carries out the reaction 1-(2-carboxyphenylamino)-1-deoxy-D-ribulose 5-phosphate + H(+) = (1S,2R)-1-C-(indol-3-yl)glycerol 3-phosphate + CO2 + H2O. It participates in amino-acid biosynthesis; L-tryptophan biosynthesis; L-tryptophan from chorismate: step 4/5. In Staphylococcus aureus (strain Mu3 / ATCC 700698), this protein is Indole-3-glycerol phosphate synthase.